The primary structure comprises 156 residues: Protein BUNDLE SHEATH DEFECTIVE 2, chloroplastic (156 aa).

A chloroplast-targeting transit peptide spans 1–41 (MNSAALNARTASVAPQPQACHACKCRQLLSRRVPPAQRQVE). Zn(2+) is bound by residues C78, C81, C89, C92, C133, C136, C144, and C147.

It belongs to the BSD2 chaperone family. As to quaternary structure, interacts with the RuBisCo large subunit (RbcL) assembled as an intermediate complex made of eight RbcL and eight BSD2 subunits.

Its subcellular location is the plastid. It localises to the chloroplast stroma. Its function is as follows. Chloroplast chaperone required for RuBisCo biogenesis and translational regulation of the RuBisCo large subunit (RbcL). Stabilizes an end-state assembly intermediate of eight RbcL subunits until the small subunits (RBCSs) become available to produce a complete stable RuBisCo complex containing eight small and eight large subunits. The chain is Protein BUNDLE SHEATH DEFECTIVE 2, chloroplastic from Chlamydomonas reinhardtii (Chlamydomonas smithii).